The following is a 193-amino-acid chain: 3-isopropylmalate dehydratase small subunit (193 aa).

It belongs to the LeuD family. LeuD type 1 subfamily. As to quaternary structure, heterodimer of LeuC and LeuD.

It carries out the reaction (2R,3S)-3-isopropylmalate = (2S)-2-isopropylmalate. It participates in amino-acid biosynthesis; L-leucine biosynthesis; L-leucine from 3-methyl-2-oxobutanoate: step 2/4. Catalyzes the isomerization between 2-isopropylmalate and 3-isopropylmalate, via the formation of 2-isopropylmaleate. This Listeria monocytogenes serovar 1/2a (strain ATCC BAA-679 / EGD-e) protein is 3-isopropylmalate dehydratase small subunit.